A 554-amino-acid chain; its full sequence is Hydroxylamine reductase (554 aa).

[2Fe-2S] cluster-binding residues include C3, C6, C18, and C25. H252, E276, C320, C408, C436, C461, E495, and K497 together coordinate hybrid [4Fe-2O-2S] cluster. At C408 the chain carries Cysteine persulfide.

This sequence belongs to the HCP family. [2Fe-2S] cluster serves as cofactor. It depends on hybrid [4Fe-2O-2S] cluster as a cofactor.

Its subcellular location is the cytoplasm. It catalyses the reaction A + NH4(+) + H2O = hydroxylamine + AH2 + H(+). Its function is as follows. Catalyzes the reduction of hydroxylamine to form NH(3) and H(2)O. This Shewanella sp. (strain MR-7) protein is Hydroxylamine reductase.